Here is a 312-residue protein sequence, read N- to C-terminus: Polyamine aminopropyltransferase (312 aa).

Residues 7-247 (FFWVQEYFTP…GPLGFALAAQ (241 aa)) form the PABS domain. An S-methyl-5'-thioadenosine-binding site is contributed by Q36. Residues H67 and E95 each contribute to the spermidine site. Residues D115 and 147–148 (DA) each bind S-methyl-5'-thioadenosine. The Proton acceptor role is filled by D165. An S-methyl-5'-thioadenosine-binding site is contributed by P174.

This sequence belongs to the spermidine/spermine synthase family. As to quaternary structure, homodimer or homotetramer.

It is found in the cytoplasm. It carries out the reaction S-adenosyl 3-(methylsulfanyl)propylamine + putrescine = S-methyl-5'-thioadenosine + spermidine + H(+). Its pathway is amine and polyamine biosynthesis; spermidine biosynthesis; spermidine from putrescine: step 1/1. Catalyzes the irreversible transfer of a propylamine group from the amino donor S-adenosylmethioninamine (decarboxy-AdoMet) to putrescine (1,4-diaminobutane) to yield spermidine. The protein is Polyamine aminopropyltransferase of Synechococcus sp. (strain JA-2-3B'a(2-13)) (Cyanobacteria bacterium Yellowstone B-Prime).